The primary structure comprises 1098 residues: Unconventional myosin-If (1098 aa).

One can recognise a Myosin motor domain in the interval 17-690 (SGVDDMVLLP…SLFLLEEVRE (674 aa)). 110–117 (GESGAGKT) contributes to the ATP binding site. The actin-binding stretch occupies residues 579-589 (PHYIRCIKPNE). The 30-residue stretch at 693 to 722 (FDGFARTIQKAWRRHVAVRKYEEMREEASN) folds into the IQ domain. One can recognise a TH1 domain in the interval 728–917 (KERRRNSINR…GRTLTVSVGD (190 aa)). 2 disordered regions span residues 913–1009 (VSVG…EFLN) and 1021–1044 (KRSVGQRPVPGVGRPKPQPRTHGP). The span at 924–937 (KPTRKGMAKGKPRR) shows a compositional bias: basic residues. A Phosphoserine modification is found at serine 1023. Positions 1041–1098 (THGPRCRALYQYVGQDVDELSFNVNEVIEILMEDPSGWWKGRLHGQEGLFPGNYVEKI) constitute an SH3 domain.

Belongs to the TRAFAC class myosin-kinesin ATPase superfamily. Myosin family.

Its function is as follows. Myosins are actin-based motor molecules with ATPase activity. Unconventional myosins serve in intracellular movements. Their highly divergent tails are presumed to bind to membranous compartments, which would be moved relative to actin filaments. This Homo sapiens (Human) protein is Unconventional myosin-If (MYO1F).